Here is a 362-residue protein sequence, read N- to C-terminus: Cobalt-precorrin-5B C(1)-methyltransferase (362 aa).

It belongs to the CbiD family.

The catalysed reaction is Co-precorrin-5B + S-adenosyl-L-methionine = Co-precorrin-6A + S-adenosyl-L-homocysteine. Its pathway is cofactor biosynthesis; adenosylcobalamin biosynthesis; cob(II)yrinate a,c-diamide from sirohydrochlorin (anaerobic route): step 6/10. In terms of biological role, catalyzes the methylation of C-1 in cobalt-precorrin-5B to form cobalt-precorrin-6A. The chain is Cobalt-precorrin-5B C(1)-methyltransferase from Burkholderia orbicola (strain MC0-3).